Consider the following 298-residue polypeptide: HTH-type transcriptional regulator CzcR (298 aa).

The region spanning 11–68 (MELRDLQIFQSVADQGSVSSAAKELNYVQSNVTARIKQLENELKTPLFYRHKRGMTLT) is the HTH lysR-type domain. The segment at residues 28–47 (VSSAAKELNYVQSNVTARIK) is a DNA-binding region (H-T-H motif).

It belongs to the LysR transcriptional regulatory family.

In Bacillus thuringiensis (strain Al Hakam), this protein is HTH-type transcriptional regulator CzcR (czcR).